Here is a 310-residue protein sequence, read N- to C-terminus: Tagatose-6-phosphate kinase (310 aa).

Belongs to the carbohydrate kinase PfkB family. LacC subfamily.

The catalysed reaction is D-tagatofuranose 6-phosphate + ATP = D-tagatofuranose 1,6-bisphosphate + ADP + H(+). Its pathway is carbohydrate metabolism; D-tagatose 6-phosphate degradation; D-glyceraldehyde 3-phosphate and glycerone phosphate from D-tagatose 6-phosphate: step 1/2. The sequence is that of Tagatose-6-phosphate kinase from Streptococcus agalactiae serotype V (strain ATCC BAA-611 / 2603 V/R).